Reading from the N-terminus, the 355-residue chain is S-adenosylmethionine:tRNA ribosyltransferase-isomerase (355 aa).

The protein belongs to the QueA family. As to quaternary structure, monomer.

It is found in the cytoplasm. It catalyses the reaction 7-aminomethyl-7-carbaguanosine(34) in tRNA + S-adenosyl-L-methionine = epoxyqueuosine(34) in tRNA + adenine + L-methionine + 2 H(+). Its pathway is tRNA modification; tRNA-queuosine biosynthesis. Functionally, transfers and isomerizes the ribose moiety from AdoMet to the 7-aminomethyl group of 7-deazaguanine (preQ1-tRNA) to give epoxyqueuosine (oQ-tRNA). The sequence is that of S-adenosylmethionine:tRNA ribosyltransferase-isomerase from Erwinia tasmaniensis (strain DSM 17950 / CFBP 7177 / CIP 109463 / NCPPB 4357 / Et1/99).